The primary structure comprises 96 residues: Nucleoid-associated protein CF0672 (96 aa).

Belongs to the YbaB/EbfC family. In terms of assembly, homodimer.

The protein resides in the cytoplasm. It is found in the nucleoid. Its function is as follows. Binds to DNA and alters its conformation. May be involved in regulation of gene expression, nucleoid organization and DNA protection. This chain is Nucleoid-associated protein CF0672, found in Chlamydia felis (strain Fe/C-56) (Chlamydophila felis).